The following is a 175-amino-acid chain: Nucleoside diphosphate kinase 6 (175 aa).

The ATP site is built by lysine 15, phenylalanine 63, arginine 91, threonine 97, arginine 111, and asparagine 121. Catalysis depends on histidine 124, which acts as the Pros-phosphohistidine intermediate.

This sequence belongs to the NDK family. Mg(2+) is required as a cofactor.

It catalyses the reaction a 2'-deoxyribonucleoside 5'-diphosphate + ATP = a 2'-deoxyribonucleoside 5'-triphosphate + ADP. The catalysed reaction is a ribonucleoside 5'-diphosphate + ATP = a ribonucleoside 5'-triphosphate + ADP. In terms of biological role, major role in the synthesis of nucleoside triphosphates other than ATP. The ATP gamma phosphate is transferred to the NDP beta phosphate via a ping-pong mechanism, using a phosphorylated active-site intermediate. The protein is Nucleoside diphosphate kinase 6 (nme6) of Danio rerio (Zebrafish).